The chain runs to 348 residues: MKTAQGVSATLTMEVARVQAIASLSKCMDTIPSEYIRSENEQPAATTLHGVVLQVPVIDLRDPDENKMVKLIADASKEWGIFQLINHGIPDEAIADLQKVGKEFFEHVPQEEKELIAKTPGSNDIEGYGTSLQKEVEGKKGWVDHLFHKIWPPSAVNYRYWPKNPPSYREANEEYGKRMREVVDRIFKSLSLGLGLEGHEMIEAAGGDEIVYLLKINYYPPCPRPDLALGVVAHTDMSYITILVPNEVQGLQVFKDGHWYDVKYIPNALIVHIGDQVEILSNGKYKSVYHRTTVNKDKTRMSWPVFLEPPSEHEVGPIPKLLSEANPPKFKTKKYKDYVYCKLNKLPQ.

A Fe2OG dioxygenase domain is found at 209–309 (EIVYLLKINY…RMSWPVFLEP (101 aa)). 3 residues coordinate Fe cation: His-234, Asp-236, and His-290.

The protein belongs to the iron/ascorbate-dependent oxidoreductase family. Requires L-ascorbate as cofactor. It depends on Fe cation as a cofactor.

The protein resides in the cytoplasm. It carries out the reaction a (2R,3R)-dihydroflavonol + 2-oxoglutarate + O2 = a flavonol + succinate + CO2 + H2O. It catalyses the reaction a (2S)-flavan-4-one + 2-oxoglutarate + O2 = a (2R,3R)-dihydroflavonol + succinate + CO2. It participates in secondary metabolite biosynthesis; flavonoid biosynthesis. Its function is as follows. Catalyzes the formation of flavonols from dihydroflavonols. It can act on dihydrokaempferol to produce kaempferol, on dihydroquercetin to produce quercitin and on dihydromyricetin to produce myricetin. The polypeptide is Flavonol synthase/flavanone 3-hydroxylase (FL) (Petunia hybrida (Petunia)).